A 150-amino-acid polypeptide reads, in one-letter code: Large ribosomal subunit protein bL9 (150 aa).

It belongs to the bacterial ribosomal protein bL9 family.

Binds to the 23S rRNA. The chain is Large ribosomal subunit protein bL9 from Streptococcus pyogenes serotype M6 (strain ATCC BAA-946 / MGAS10394).